Reading from the N-terminus, the 411-residue chain is Protrudin (411 aa).

The disordered stretch occupies residues Met-1 to Pro-27. The Cytoplasmic segment spans residues Met-1–Arg-66. Residues Met-1 to Trp-92 form a sufficient for homooligomerization region. The sufficient for localization to endoplasmic reticulum tubular network and for interactions with REEP1, REEP5, ATL1, ATL2, ATL3 and SPAST stretch occupies residues Met-1 to Leu-205. The necessary for interaction with RAB11A and function in neurite outgrowth stretch occupies residues Leu-51–Leu-64. The helical transmembrane segment at Trp-67–Leu-87 threads the bilayer. A topological domain (lumenal) is located at residue Asn-88. Residues Glu-89–Leu-109 form a helical membrane-spanning segment. The Cytoplasmic segment spans residues Gln-110–Gly-187. An intramembrane region (helical) is located at residues Ala-188–Leu-208. At Asn-209–Lys-411 the chain is on the cytoplasmic side. The segment at Met-234–Glu-286 is disordered. The necessary for interaction with KIF5A stretch occupies residues Thr-271–Lys-361. Over residues Glu-276–Glu-286 the composition is skewed to acidic residues. Positions Glu-286–Glu-292 are necessary for interaction with VAPA and function in cell projections formation. The FYVE-type zinc-finger motif lies at Thr-344–Ser-410. Positions 350, 353, 366, 369, 374, 377, 402, and 405 each coordinate Zn(2+).

Can form homooligomers (monomers, dimers and tetramers). Interacts with RAB11A (GDP-bound form); regulates RAB11A. Interacts with FKBP8; may negatively regulate ZFYVE27 phosphorylation. Interacts with VAPA (via MSP domain); may regulate ZFYVE27 retention in the endoplasmic reticulum and its function in cell projections formation. Interacts with VAPB (via MSP domain). Interacts with REEP1, REEP5 and ATL1. Interacts with ATL2, ATL3 and SPAST. Interacts with KIF5A and RTN3. Interacts with RAB11B (GDP-bound form), SURF4, KIF5B and KIF5C. In terms of processing, phosphorylated. Phosphorylation is induced by NGF through the MAPK/ERK pathway and modulates interaction with RAB11A.

The protein localises to the recycling endosome membrane. It localises to the endoplasmic reticulum membrane. Its subcellular location is the cell projection. It is found in the growth cone membrane. Functionally, key regulator of RAB11-dependent vesicular trafficking during neurite extension through polarized membrane transport. Promotes axonal elongation and contributes to the establishment of neuronal cell polarity. Involved in nerve growth factor-induced neurite formation in VAPA-dependent manner. Contributes to both the formation and stabilization of the tubular ER network. Involved in ER morphogenesis by regulating the sheet-to-tubule balance and possibly the density of tubule interconnections. Acts as an adapter protein and facilitates the interaction of KIF5A with VAPA, VAPB, SURF4, RAB11A, RAB11B and RTN3 and the ZFYVE27-KIF5A complex contributes to the transport of these proteins in neurons. Can induce formation of neurite-like membrane protrusions in non-neuronal cells in a KIF5A/B-dependent manner. This Homo sapiens (Human) protein is Protrudin (ZFYVE27).